The primary structure comprises 397 residues: MWWLLVTVCFIHMSGNAFCFLGKIAKNPEASMNVSQMISYWGYPSEMHKVITADGYILQVYRIPHGKNNANHLGQRPVVFLQHGLLGSATNWISNLPKNSLGFLLADAGYDVWLGNSRGNTWAQEHLYYSPDSPEFWAFSFDEMAEYDLPSTIDFILRRTGQKKLHYVGHSQGTTIGFIAFSTSPTLAEKIKVFYALAPVATVKYTKSLFNKLALIPHFLFKIIFGDKMFYPHTFLEQFLGVEMCSRETLDVLCKNALFAITGVDNKNFNMSRLDVYIAHNPAGTSVQNTLHWRQAVKSGKFQAFDWGAPYQNLMHYHQPTPPIYNLTAMNVPIAVWSADNDLLADPQDVDFLLSKLSNLIYHKEIPNYNHLDFIWAMDAPQEVYNEIVSLMAEDKK.

Positions 1–19 are cleaved as a signal peptide; the sequence is MWWLLVTVCFIHMSGNAFC. Residue Asn33 is glycosylated (N-linked (GlcNAc...) asparagine). An AB hydrolase-1 domain is found at 77–376; it reads PVVFLQHGLL…PNYNHLDFIW (300 aa). The active-site Nucleophile is the Ser171. Cys245 and Cys254 are disulfide-bonded. Asn270 and Asn326 each carry an N-linked (GlcNAc...) asparagine glycan. Residues Asp342 and His371 each act as charge relay system in the active site.

Belongs to the AB hydrolase superfamily. Lipase family.

The protein localises to the secreted. The catalysed reaction is a triacylglycerol + H2O = a diacylglycerol + a fatty acid + H(+). It carries out the reaction 1,2,3-tri-(9Z-octadecenoyl)-glycerol + H2O = 1,2-di-(9Z-octadecenoyl)-sn-glycerol + (9Z)-octadecenoate + H(+). The enzyme catalyses 1,2,3-trioctanoylglycerol + H2O = 1,2-dioctanoyl-sn-glycerol + octanoate + H(+). Its activity is regulated as follows. Inhibited by diethylp-nitrophenyl phosphate but not inhibited by thiol reagents 5,5'-dithiobis(2-nitrobenzoic acid) or 4,4'-dithiopyridine. In terms of biological role, catalyzes the hydrolysis of triacylglycerols to yield free fatty acids, diacylglycerol, monoacylglycerol, and glycerol. Shows a preferential hydrolysis at the sn-3 position of triacylglycerol. This Bos taurus (Bovine) protein is Gastric triacylglycerol lipase (LIPF).